The primary structure comprises 374 residues: Chaperone protein DnaJ (374 aa).

A J domain is found at 5–70; the sequence is DYYEVLGVNL…RKRASYDQFG (66 aa). The CR-type zinc-finger motif lies at 133–210; the sequence is GLSRTIKVPT…CHGQGRQQQT (78 aa). Zn(2+)-binding residues include C146, C149, C162, C165, C184, C187, C198, and C201. CXXCXGXG motif repeat units lie at residues 146-153, 162-169, 184-191, and 198-205; these read CKTCNGSG, CPRCNGSG, CSVCRGRG, and CTDCHGQG.

This sequence belongs to the DnaJ family. In terms of assembly, homodimer. Requires Zn(2+) as cofactor.

The protein localises to the cytoplasm. Participates actively in the response to hyperosmotic and heat shock by preventing the aggregation of stress-denatured proteins and by disaggregating proteins, also in an autonomous, DnaK-independent fashion. Unfolded proteins bind initially to DnaJ; upon interaction with the DnaJ-bound protein, DnaK hydrolyzes its bound ATP, resulting in the formation of a stable complex. GrpE releases ADP from DnaK; ATP binding to DnaK triggers the release of the substrate protein, thus completing the reaction cycle. Several rounds of ATP-dependent interactions between DnaJ, DnaK and GrpE are required for fully efficient folding. Also involved, together with DnaK and GrpE, in the DNA replication of plasmids through activation of initiation proteins. The chain is Chaperone protein DnaJ from Coxiella burnetii (strain RSA 493 / Nine Mile phase I).